The following is a 644-amino-acid chain: Anti-sigma-I factor RsgI3 (644 aa).

Residues 1 to 56 are Cytoplasmic-facing; it reads MDNIGVIIKIEGNEAIVMTDDCSFKKVPIKDGMHPGQKILVPNNEVIQKENKSIKR. Positions 3–50 constitute a RsgI N-terminal anti-sigma domain; it reads NIGVIIKIEGNEAIVMTDDCSFKKVPIKDGMHPGQKILVPNNEVIQKE. Residues 57 to 77 traverse the membrane as a helical segment; that stretch reads ISAVATGIAAVFLMVLSLIWI. Over 78–644 the chain is Extracellular; that stretch reads NKPGRPDGIY…VVPSKNLFAD (567 aa). Polar residues predominate over residues 302 to 328; it reads PTNTPSISTKPSATPAENPTPKLTQKP. The tract at residues 302–359 is disordered; sequence PTNTPSISTKPSATPAENPTPKLTQKPTPVPAKTGERTSTTPTPTPAPTVRNGTGSGL. PA14 domains follow at residues 354 to 491 and 502 to 640; these read GTGS…PSSQ and KDVN…PSKN.

As to quaternary structure, interacts (via RsgI N-terminal anti-sigma domain) with SigI3.

It is found in the cell membrane. Functionally, anti-sigma factor for SigI3. Negatively regulates SigI3 activity through direct interaction. Binding of the polysaccharide substrate to the extracellular C-terminal sensing domain of RsgI3 may induce a conformational change in its N-terminal cytoplasmic region, leading to the release and activation of SigI3. The protein is Anti-sigma-I factor RsgI3 of Acetivibrio thermocellus (strain ATCC 27405 / DSM 1237 / JCM 9322 / NBRC 103400 / NCIMB 10682 / NRRL B-4536 / VPI 7372) (Clostridium thermocellum).